Here is a 913-residue protein sequence, read N- to C-terminus: Auxilin (913 aa).

M1 carries the post-translational modification N-acetylmethionine. Repeat copies occupy residues 36-39 (NLKD), 40-43 (NLKD), and 44-47 (TLKD). A 3 X 4 AA approximate tandem repeats region spans residues 36-47 (NLKDNLKDTLKD). The region spanning 55–222 (SVTSYTKGDL…GYMCDLLADK (168 aa)) is the Phosphatase tensin-type domain. S112 carries the post-translational modification Phosphoserine. C164 serves as the catalytic Phosphocysteine intermediate. The C2 tensin-type domain occupies 228 to 366 (FKPLTIKSIT…FQVTLDVELQ (139 aa)). The SH3-binding signature appears at 409-417 (PIDIPPDNP). A disordered region spans residues 451–776 (QESEQSDDEL…GKGSSNLEGK (326 aa)). A phosphoserine mark is found at S453 and S456. Residues 506-523 (AMSNSFSPPAAPPTNSEL) are compositionally biased toward polar residues. Over residues 554 to 572 (ASTQSTPRRSATSTSASPT) the composition is skewed to low complexity. A phosphoserine mark is found at S563 and S570. The span at 599–629 (FLNTSSASSDPFLQPTRSPSPTVHASSTPAV) shows a compositional bias: polar residues. A compositionally biased stretch (low complexity) spans 654–669 (SAATSPTGSSHGTPTH). The region spanning 849–913 (TKWKPVGMAD…FENQGQKPLY (65 aa)) is the J domain.

As to quaternary structure, forms a complex composed of HSPA8, CLTC and DNAJC6. Interacts with HSPA8/HSC70 in an ATP-dependent manner; this interaction stimulates the HSPA8's ATPase activity. Interacts with CLTC; this interaction produces a local change in heavy-chain contacts, creating a detectable global distortion of the clathrin coat. Interacts with AP2A2. Interacts with DNM1(GTP-bound form); this interaction allows clathrin-coated vesicle (CCV) formation at the plasma membrane. Post-translationally, phosphorylation at Ser-570 modulates its ability to bind CLTC and therefore the synaptic vesicle endocytosis (SVE). The N-terminus is blocked. Expressed in various brain regions, including cerebellum, corpus callosum, cortex, striatum, brainstem, pons, putamen, spinal cord and substantia nigra. Very low expression in non-neural tissues such as leukocytes, liver, adipose tissue, skeletal muscle and bone marrow.

It is found in the cytoplasmic vesicle. The protein localises to the clathrin-coated vesicle. May act as a protein phosphatase and/or a lipid phosphatase. Co-chaperone that recruits HSPA8/HSC70 to clathrin-coated vesicles (CCVs) and promotes the ATP-dependent dissociation of clathrin from CCVs and participates in clathrin-mediated endocytosis of synaptic vesicles and their recycling and also in intracellular trafficking. Firstly, binds tightly to the clathrin cages, at a ratio of one DNAJC6 per clathrin triskelion. The HSPA8:ATP complex then binds to the clathrin-auxilin cage, initially at a ratio of one HSPA8 per triskelion leading to ATP hydrolysis stimulation and causing a conformational change in the HSPA8. This cycle is repeated three times to drive to a complex containing the clathrin-auxilin cage associated to three HSPA8:ADP complex. The ATP hydrolysis of the third HSPA8:ATP complex leads to a concerted dismantling of the cage into component triskelia. Then, dissociates from the released triskelia and be recycled to initiate another cycle of HSPA8's recruitment. Also acts during the early steps of clathrin-coated vesicle (CCV) formation through its interaction with the GTP bound form of DNM1. This chain is Auxilin, found in Homo sapiens (Human).